A 141-amino-acid polypeptide reads, in one-letter code: Large ribosomal subunit protein uL11 (141 aa).

This sequence belongs to the universal ribosomal protein uL11 family. Part of the ribosomal stalk of the 50S ribosomal subunit. Interacts with L10 and the large rRNA to form the base of the stalk. L10 forms an elongated spine to which L12 dimers bind in a sequential fashion forming a multimeric L10(L12)X complex. Post-translationally, one or more lysine residues are methylated.

In terms of biological role, forms part of the ribosomal stalk which helps the ribosome interact with GTP-bound translation factors. This chain is Large ribosomal subunit protein uL11, found in Methylacidiphilum infernorum (isolate V4) (Methylokorus infernorum (strain V4)).